A 191-amino-acid polypeptide reads, in one-letter code: Thymidylate kinase (191 aa).

7-14 contributes to the ATP binding site; that stretch reads GVDGAGKS.

The protein belongs to the thymidylate kinase family.

It carries out the reaction dTMP + ATP = dTDP + ADP. Its function is as follows. Phosphorylation of dTMP to form dTDP in both de novo and salvage pathways of dTTP synthesis. This chain is Thymidylate kinase, found in Helicobacter pylori (strain Shi470).